The chain runs to 322 residues: ATP-dependent 6-phosphofructokinase (322 aa).

G13 provides a ligand contact to ATP. Residue 23-27 (RAVVR) coordinates ADP. Residues 74–75 (RC) and 104–107 (GDGS) each bind ATP. Residue D105 coordinates Mg(2+). Position 127 to 129 (127 to 129 (TID)) interacts with substrate. The active-site Proton acceptor is D129. R156 is a binding site for ADP. Substrate is bound by residues R164 and 171-173 (MGR). ADP contacts are provided by residues 187–189 (GAE) and 215–217 (KRH). Substrate-binding positions include E224, R246, and 252–255 (HIQR).

It belongs to the phosphofructokinase type A (PFKA) family. ATP-dependent PFK group I subfamily. Prokaryotic clade 'B1' sub-subfamily. Homotetramer. The cofactor is Mg(2+).

Its subcellular location is the cytoplasm. It catalyses the reaction beta-D-fructose 6-phosphate + ATP = beta-D-fructose 1,6-bisphosphate + ADP + H(+). Its pathway is carbohydrate degradation; glycolysis; D-glyceraldehyde 3-phosphate and glycerone phosphate from D-glucose: step 3/4. With respect to regulation, allosterically activated by ADP and other diphosphonucleosides, and allosterically inhibited by phosphoenolpyruvate. Its function is as follows. Catalyzes the phosphorylation of D-fructose 6-phosphate to fructose 1,6-bisphosphate by ATP, the first committing step of glycolysis. The protein is ATP-dependent 6-phosphofructokinase of Paenibacillus macquariensis (Bacillus macquariensis).